Consider the following 414-residue polypeptide: Serine/threonine transporter SstT (414 aa).

The next 8 helical transmembrane spans lie at 16–36 (GSLVKQILVGLVLGILLAWIS), 46–66 (LGTLFVGALKAVAPVLVLMLV), 84–104 (ILFLYLLGTFSAALAAVVFSF), 143–163 (ALLNANYIGILVWAVGLGFAL), 180–200 (AVTFMVKLVIRFAPVGIFGLV), 219–239 (LVVLIGCMLLVALVVNPLLVF), 300–320 (MAGAAITITVLTLAAVHTLGV), and 332–352 (VVASLCACGASGVAGGSLLLI).

This sequence belongs to the dicarboxylate/amino acid:cation symporter (DAACS) (TC 2.A.23) family.

It localises to the cell inner membrane. The enzyme catalyses L-serine(in) + Na(+)(in) = L-serine(out) + Na(+)(out). It catalyses the reaction L-threonine(in) + Na(+)(in) = L-threonine(out) + Na(+)(out). In terms of biological role, involved in the import of serine and threonine into the cell, with the concomitant import of sodium (symport system). This Salmonella newport (strain SL254) protein is Serine/threonine transporter SstT.